Consider the following 142-residue polypeptide: Large ribosomal subunit protein uL13 (142 aa).

This sequence belongs to the universal ribosomal protein uL13 family. Part of the 50S ribosomal subunit.

This protein is one of the early assembly proteins of the 50S ribosomal subunit, although it is not seen to bind rRNA by itself. It is important during the early stages of 50S assembly. This Treponema pallidum (strain Nichols) protein is Large ribosomal subunit protein uL13.